The sequence spans 97 residues: Exodeoxyribonuclease 7 small subunit (97 aa).

Residues 1–22 (MAKTASPGATPPGNGTEPLPDN) are disordered.

It belongs to the XseB family. Heterooligomer composed of large and small subunits.

The protein localises to the cytoplasm. The catalysed reaction is Exonucleolytic cleavage in either 5'- to 3'- or 3'- to 5'-direction to yield nucleoside 5'-phosphates.. In terms of biological role, bidirectionally degrades single-stranded DNA into large acid-insoluble oligonucleotides, which are then degraded further into small acid-soluble oligonucleotides. This Burkholderia cenocepacia (strain HI2424) protein is Exodeoxyribonuclease 7 small subunit.